The sequence spans 201 residues: B-cell CLL/lymphoma 7 protein family member A (201 aa).

Positions Tyr46–Ser201 are disordered. Residues Pro54–Gly71 show a composition bias toward basic and acidic residues. Composition is skewed to polar residues over residues Glu73–Pro83, Ser93–Pro114, and Gln133–Gly142. A compositionally biased stretch (basic and acidic residues) spans Thr158 to Gly167. Residues Asp168–Ala179 are compositionally biased toward polar residues. Basic and acidic residues predominate over residues Gly192–Ser201.

The protein belongs to the BCL7 family.

In Danio rerio (Zebrafish), this protein is B-cell CLL/lymphoma 7 protein family member A (bcl7a).